The chain runs to 477 residues: Sulfate adenylyltransferase subunit 1 (477 aa).

The tr-type G domain occupies 22–239 (KDMLRFITCG…TVQISHDAPL (218 aa)). Residues 31–38 (GSVDDGKS) are G1. 31-38 (GSVDDGKS) is a GTP binding site. The tract at residues 89–93 (GITID) is G2. A G3 region spans residues 110-113 (DCPG). Residues 110 to 114 (DCPGH) and 165 to 168 (NKMD) each bind GTP. The G4 stretch occupies residues 165 to 168 (NKMD). A G5 region spans residues 202–204 (SAL).

This sequence belongs to the TRAFAC class translation factor GTPase superfamily. Classic translation factor GTPase family. CysN/NodQ subfamily. Heterodimer composed of CysD, the smaller subunit, and CysN.

The catalysed reaction is sulfate + ATP + H(+) = adenosine 5'-phosphosulfate + diphosphate. It participates in sulfur metabolism; hydrogen sulfide biosynthesis; sulfite from sulfate: step 1/3. Its function is as follows. With CysD forms the ATP sulfurylase (ATPS) that catalyzes the adenylation of sulfate producing adenosine 5'-phosphosulfate (APS) and diphosphate, the first enzymatic step in sulfur assimilation pathway. APS synthesis involves the formation of a high-energy phosphoric-sulfuric acid anhydride bond driven by GTP hydrolysis by CysN coupled to ATP hydrolysis by CysD. The polypeptide is Sulfate adenylyltransferase subunit 1 (Chromobacterium violaceum (strain ATCC 12472 / DSM 30191 / JCM 1249 / CCUG 213 / NBRC 12614 / NCIMB 9131 / NCTC 9757 / MK)).